A 1036-amino-acid chain; its full sequence is Lethal(2) giant larvae protein homolog 1 (1036 aa).

10 WD repeats span residues 38–71, 78–119, 139–175, 199–233, 239–271, 289–331, 339–373, 395–473, 517–592, and 601–662; these read SALAFDPELRIMAIGTRSGAVKIYGAPGVEFTGL, VTQM…GLSF, VTVVLLAAGDTVVLGTESGSIFFLDVATLALLEGQTL, SLQGHLQDPSKILIGYSRGLLVIWSQATQSVEHVF, LESLCWGRGGSNIISSHSDGSYAIWSTDTGSPP, AINK…ETLV, VIDFFTVHSTQPEDGFDNPQALAVLLEEELVVLDL, TCSA…YKLS, QKVA…RVLI, and TAVA…LRQS. S662 is subject to Phosphoserine. The tract at residues 670–694 is disordered; that stretch reads RVSGKKRATTASSKLQEANAQLAEQ. A compositionally biased stretch (polar residues) spans 678 to 693; that stretch reads TTASSKLQEANAQLAE. WD repeat units lie at residues 722-782, 791-843, 848-901, and 915-938; these read VRCL…KEVQ, AIAV…VSAK, LTAH…VHYS, and VFTRHGQGFYLISPSEFERFSLSA. The residue at position 957 (T957) is a Phosphothreonine. Phosphoserine is present on residues S964, S982, and S989. The tract at residues 980 to 1002 is disordered; the sequence is PESCEGSPSSAHSKRADTMEPPE.

It belongs to the WD repeat L(2)GL family. As to quaternary structure, associated with nonmuscle myosin II heavy chain. Interacts with PRKCI/aPKC, PARD6B/Par-6 and PARD6A. Interacts with STX4A. Interacts with DCAF1. Interacts with RAB10 (GDP-bound form); the interaction is direct and promotes RAB10 association with membranes and activation through competition with the Rab inhibitor GDI1. Post-translationally, phosphorylated by PRKCI. Expressed at high level in the testis and at lower level in ovary, brain, spleen and kidney.

The protein resides in the early endosome membrane. It is found in the golgi apparatus. The protein localises to the trans-Golgi network membrane. It localises to the golgi apparatus membrane. Its subcellular location is the cell projection. The protein resides in the axon. It is found in the cytoplasm. The protein localises to the cytoskeleton. In terms of biological role, cortical cytoskeleton protein found in a complex involved in maintaining cell polarity and epithelial integrity. Involved in the regulation of mitotic spindle orientation, proliferation, differentiation and tissue organization of neuroepithelial cells. Involved in axonogenesis through RAB10 activation thereby regulating vesicular membrane trafficking toward the axonal plasma membrane. The chain is Lethal(2) giant larvae protein homolog 1 (Llgl1) from Rattus norvegicus (Rat).